The following is a 486-amino-acid chain: Protein hold'em (486 aa).

The OB DNA-binding region spans 166–285; sequence IITTNVNLLV…DCRLLLAFAA (120 aa).

Belongs to the MEIOB family. In terms of assembly, interacts with mei-9 and Ercc1.

Its function is as follows. Single-stranded DNA-binding protein required for meiosis. May be involved in the resolution of recombination intermediates into crossovers in the meiotic recombination pathway. The protein is Protein hold'em (hdm) of Drosophila melanogaster (Fruit fly).